Here is a 312-residue protein sequence, read N- to C-terminus: Acetylglutamate kinase (312 aa).

Substrate is bound by residues 76 to 77 (GG), Arg98, and Asn199.

It belongs to the acetylglutamate kinase family. ArgB subfamily.

Its subcellular location is the cytoplasm. It catalyses the reaction N-acetyl-L-glutamate + ATP = N-acetyl-L-glutamyl 5-phosphate + ADP. Its pathway is amino-acid biosynthesis; L-arginine biosynthesis; N(2)-acetyl-L-ornithine from L-glutamate: step 2/4. Functionally, catalyzes the ATP-dependent phosphorylation of N-acetyl-L-glutamate. The sequence is that of Acetylglutamate kinase from Beutenbergia cavernae (strain ATCC BAA-8 / DSM 12333 / CCUG 43141 / JCM 11478 / NBRC 16432 / NCIMB 13614 / HKI 0122).